Reading from the N-terminus, the 500-residue chain is Glycerol kinase (500 aa).

Threonine 11 is an ADP binding site. ATP-binding residues include threonine 11, threonine 12, and serine 13. A sn-glycerol 3-phosphate-binding site is contributed by threonine 11. Residue arginine 15 coordinates ADP. The sn-glycerol 3-phosphate site is built by arginine 81, glutamate 82, tyrosine 133, and aspartate 242. 5 residues coordinate glycerol: arginine 81, glutamate 82, tyrosine 133, aspartate 242, and glutamine 243. Threonine 264 and glycine 307 together coordinate ADP. Residues threonine 264, glycine 307, glutamine 311, and glycine 411 each contribute to the ATP site. Glycine 411 contributes to the ADP binding site.

Belongs to the FGGY kinase family.

It carries out the reaction glycerol + ATP = sn-glycerol 3-phosphate + ADP + H(+). The protein operates within polyol metabolism; glycerol degradation via glycerol kinase pathway; sn-glycerol 3-phosphate from glycerol: step 1/1. Its activity is regulated as follows. Inhibited by fructose 1,6-bisphosphate (FBP). Functionally, key enzyme in the regulation of glycerol uptake and metabolism. Catalyzes the phosphorylation of glycerol to yield sn-glycerol 3-phosphate. This is Glycerol kinase from Bradyrhizobium sp. (strain BTAi1 / ATCC BAA-1182).